A 568-amino-acid polypeptide reads, in one-letter code: Sulfite reductase [NADPH] hemoprotein beta-component (568 aa).

[4Fe-4S] cluster is bound by residues Cys-425, Cys-431, Cys-470, and Cys-474. Siroheme is bound at residue Cys-474.

This sequence belongs to the nitrite and sulfite reductase 4Fe-4S domain family. Alpha(8)-beta(8). The alpha component is a flavoprotein, the beta component is a hemoprotein. Requires siroheme as cofactor. [4Fe-4S] cluster serves as cofactor.

It carries out the reaction hydrogen sulfide + 3 NADP(+) + 3 H2O = sulfite + 3 NADPH + 4 H(+). Its pathway is sulfur metabolism; hydrogen sulfide biosynthesis; hydrogen sulfide from sulfite (NADPH route): step 1/1. Functionally, component of the sulfite reductase complex that catalyzes the 6-electron reduction of sulfite to sulfide. This is one of several activities required for the biosynthesis of L-cysteine from sulfate. This is Sulfite reductase [NADPH] hemoprotein beta-component from Xanthomonas campestris pv. campestris (strain ATCC 33913 / DSM 3586 / NCPPB 528 / LMG 568 / P 25).